The primary structure comprises 78 residues: Translation initiation factor IF-1, chloroplastic (78 aa).

An S1-like domain is found at 1–73 (MASNRELIEM…TKGRIIYRLR (73 aa)).

Belongs to the IF-1 family. Component of the 30S ribosomal translation pre-initiation complex which assembles on the 30S ribosome in the order IF-2 and IF-3, IF-1 and N-formylmethionyl-tRNA(fMet); mRNA recruitment can occur at any time during PIC assembly.

It is found in the plastid. The protein localises to the chloroplast. Its function is as follows. One of the essential components for the initiation of protein synthesis. Stabilizes the binding of IF-2 and IF-3 on the 30S subunit to which N-formylmethionyl-tRNA(fMet) subsequently binds. Helps modulate mRNA selection, yielding the 30S pre-initiation complex (PIC). Upon addition of the 50S ribosomal subunit IF-1, IF-2 and IF-3 are released leaving the mature 70S translation initiation complex. In Ostreococcus tauri, this protein is Translation initiation factor IF-1, chloroplastic.